Reading from the N-terminus, the 203-residue chain is Dephospho-CoA kinase (203 aa).

Residues 4–201 enclose the DPCK domain; sequence IIGLTGGIGS…RKYLMLARKH (198 aa). 12–17 lines the ATP pocket; it reads GSGKTR.

It belongs to the CoaE family.

Its subcellular location is the cytoplasm. The catalysed reaction is 3'-dephospho-CoA + ATP = ADP + CoA + H(+). The protein operates within cofactor biosynthesis; coenzyme A biosynthesis; CoA from (R)-pantothenate: step 5/5. In terms of biological role, catalyzes the phosphorylation of the 3'-hydroxyl group of dephosphocoenzyme A to form coenzyme A. The sequence is that of Dephospho-CoA kinase from Nitrosomonas europaea (strain ATCC 19718 / CIP 103999 / KCTC 2705 / NBRC 14298).